The following is a 58-amino-acid chain: Large ribosomal subunit protein uL30 (58 aa).

This sequence belongs to the universal ribosomal protein uL30 family. Part of the 50S ribosomal subunit.

The sequence is that of Large ribosomal subunit protein uL30 from Erythrobacter litoralis (strain HTCC2594).